The primary structure comprises 307 residues: Olfactory receptor 8K5 (307 aa).

The Extracellular segment spans residues 1–25 (MGQHNLTVLTEFILMELTRRPELQI). N5 carries an N-linked (GlcNAc...) asparagine glycan. The chain crosses the membrane as a helical span at residues 26–46 (PLFGVFLVIYLITVVGNLTMI). Residues 47–54 (ILTKLDSH) lie on the Cytoplasmic side of the membrane. The chain crosses the membrane as a helical span at residues 55–75 (LHTPMYFSIRHLAFVDLGNST). Residues 76 to 99 (VICPKVLANFVVDRNTISYYACAA) lie on the Extracellular side of the membrane. An intrachain disulfide couples C97 to C189. Residues 100 to 120 (QLAFFLMFIISEFFILSAMAY) form a helical membrane-spanning segment. Residues 121 to 139 (DRYVAICNPLLYYVIMSQR) are Cytoplasmic-facing. Residues 140–160 (LCHVLVGIQYLYSTFQALMFT) form a helical membrane-spanning segment. At 161 to 197 (IKIFTLTFCGSNVISHFYCDDVPLLPMLCSNAQEIEL) the chain is on the extracellular side. Residues 198–217 (LSILFSVFNLISSFLIVLVS) form a helical membrane-spanning segment. The Cytoplasmic segment spans residues 218-237 (YMLILLAICQMHSAEGRKKA). A helical transmembrane segment spans residues 238–258 (FSTCGSHLTVVVVFYGSLLFM). The Extracellular segment spans residues 259–271 (YMQPNSTHFFDTD). A glycan (N-linked (GlcNAc...) asparagine) is linked at N263. The helical transmembrane segment at 272–292 (KMASVFYTLVIPMLNPLIYSL) threads the bilayer. Residues 293–307 (RNEEVKNAFYKLFEN) lie on the Cytoplasmic side of the membrane.

Belongs to the G-protein coupled receptor 1 family.

The protein localises to the cell membrane. In terms of biological role, odorant receptor. The chain is Olfactory receptor 8K5 (OR8K5) from Homo sapiens (Human).